Consider the following 537-residue polypeptide: Serendipity locus protein alpha (537 aa).

It localises to the cytoplasm. Its subcellular location is the cell membrane. In terms of biological role, required for the cellularization of the syncytial blastoderm embryo. Involved in the localization of the actin filaments just prior to and during plasma membrane invagination. Sry-alpha together with nullo and bnk may provide auxiliary functions, by acting both to stabilize a large and dynamic microfilament structure and regulate its functions. The protein is Serendipity locus protein alpha (Sry-alpha) of Drosophila virilis (Fruit fly).